A 440-amino-acid chain; its full sequence is Chromosome partition protein MukF (440 aa).

A leucine-zipper region spans residues 208–236 (LSETSGTLRELQDTLEAAGDKLQANLLRI).

Belongs to the MukF family. As to quaternary structure, interacts, and probably forms a ternary complex, with MukE and MukB via its C-terminal region. The complex formation is stimulated by calcium or magnesium. It is required for an interaction between MukE and MukB.

It is found in the cytoplasm. Its subcellular location is the nucleoid. In terms of biological role, involved in chromosome condensation, segregation and cell cycle progression. May participate in facilitating chromosome segregation by condensation DNA from both sides of a centrally located replisome during cell division. Not required for mini-F plasmid partitioning. Probably acts via its interaction with MukB and MukE. Overexpression results in anucleate cells. It has a calcium binding activity. The sequence is that of Chromosome partition protein MukF from Shigella boydii serotype 18 (strain CDC 3083-94 / BS512).